A 266-amino-acid polypeptide reads, in one-letter code: Putative expansin-A30 (266 aa).

The N-terminal stretch at 1-24 is a signal peptide; that stretch reads MAAASSTTATTAILAAVIISLAGA. Positions 55-170 constitute an Expansin-like EG45 domain; the sequence is GGACGYGNLY…RRVPCARAGG (116 aa). One can recognise an Expansin-like CBD domain in the interval 180–261; the sequence is YWLLAYVMNV…SWCFGLTYQA (82 aa).

Belongs to the expansin family. Expansin A subfamily.

It localises to the secreted. It is found in the cell wall. The protein localises to the membrane. May cause loosening and extension of plant cell walls by disrupting non-covalent bonding between cellulose microfibrils and matrix glucans. No enzymatic activity has been found. May be required for rapid internodal elongation in deepwater rice during submergence. This is Putative expansin-A30 (EXPA30) from Oryza sativa subsp. japonica (Rice).